A 274-amino-acid chain; its full sequence is Rhamnulose-1-phosphate aldolase (274 aa).

The active site involves Glu-117. Zn(2+) contacts are provided by His-141, His-143, and His-212.

Belongs to the aldolase class II family. RhaD subfamily. As to quaternary structure, homotetramer. Zn(2+) is required as a cofactor.

The protein localises to the cytoplasm. It carries out the reaction L-rhamnulose 1-phosphate = (S)-lactaldehyde + dihydroxyacetone phosphate. It functions in the pathway carbohydrate degradation; L-rhamnose degradation; glycerone phosphate from L-rhamnose: step 3/3. Its function is as follows. Catalyzes the reversible cleavage of L-rhamnulose-1-phosphate to dihydroxyacetone phosphate (DHAP) and L-lactaldehyde. In Yersinia pseudotuberculosis serotype IB (strain PB1/+), this protein is Rhamnulose-1-phosphate aldolase.